Here is a 659-residue protein sequence, read N- to C-terminus: tRNA (guanine(26)-N(2))-dimethyltransferase (659 aa).

Residues 1–23 (MQGSSLWLSLTFRSARVLSRARF) constitute a mitochondrion transit peptide. The 445-residue stretch at 55–499 (TTVTEGAAKI…APASALWDIM (445 aa)) folds into the Trm1 methyltransferase domain. Residue Arg-82 participates in S-adenosyl-L-methionine binding. Residue Ser-120 is modified to Phosphoserine. S-adenosyl-L-methionine-binding residues include Arg-166 and Asp-184. Residues Cys-348, Cys-351, Cys-384, and Cys-387 each coordinate Zn(2+). At Ser-517 the chain carries Phosphoserine. 2 disordered regions span residues 537 to 578 (EDAN…AMEE) and 616 to 659 (RGDQ…PGID). Residues 543–575 (SRQRGLKRFQANPEANWGPRPRARPGGKAADEA) carry the Nuclear localization signal motif. The C3H1-type zinc-finger motif lies at 600–627 (RLKTFPCKRFKEGTCQRGDQCCYSHSPP). Position 625 is a phosphoserine (Ser-625). Phosphothreonine is present on residues Thr-628 and Thr-646.

It belongs to the class I-like SAM-binding methyltransferase superfamily. Trm1 family. Post-translationally, (Microbial infection) Cleaved between Gln-530 and Ala-531 by the 3C-like proteinase nsp5 from human coronavirus SARS-CoV-2, leading to its inactivation.

The protein resides in the mitochondrion. The protein localises to the nucleus. It is found in the cytoplasm. The enzyme catalyses guanosine(26) in tRNA + 2 S-adenosyl-L-methionine = N(2)-dimethylguanosine(26) in tRNA + 2 S-adenosyl-L-homocysteine + 2 H(+). Its function is as follows. Dimethylates a single guanine residue at position 26 of most nuclear- and mitochondrial-encoded tRNAs using S-adenosyl-L-methionine as donor of the methyl groups. tRNA guanine(26)-dimethylation is required for redox homeostasis and ensure proper cellular proliferation and oxidative stress survival. The protein is tRNA (guanine(26)-N(2))-dimethyltransferase of Homo sapiens (Human).